The primary structure comprises 424 residues: Kynureninase (424 aa).

Pyridoxal 5'-phosphate-binding positions include leucine 106, threonine 107, 134–137, aspartate 219, histidine 222, and tyrosine 244; that span reads FPSD. The residue at position 245 (lysine 245) is an N6-(pyridoxal phosphate)lysine. Pyridoxal 5'-phosphate contacts are provided by tryptophan 274 and asparagine 302.

The protein belongs to the kynureninase family. In terms of assembly, homodimer. The cofactor is pyridoxal 5'-phosphate.

It catalyses the reaction L-kynurenine + H2O = anthranilate + L-alanine + H(+). The enzyme catalyses 3-hydroxy-L-kynurenine + H2O = 3-hydroxyanthranilate + L-alanine + H(+). The protein operates within amino-acid degradation; L-kynurenine degradation; L-alanine and anthranilate from L-kynurenine: step 1/1. It functions in the pathway cofactor biosynthesis; NAD(+) biosynthesis; quinolinate from L-kynurenine: step 2/3. Its function is as follows. Catalyzes the cleavage of L-kynurenine (L-Kyn) and L-3-hydroxykynurenine (L-3OHKyn) into anthranilic acid (AA) and 3-hydroxyanthranilic acid (3-OHAA), respectively. In Xanthomonas campestris pv. campestris (strain B100), this protein is Kynureninase.